The primary structure comprises 535 residues: T-complex protein 1 subunit epsilon (535 aa).

This sequence belongs to the TCP-1 chaperonin family. As to quaternary structure, heterooligomeric complex of about 850 to 900 kDa that forms two stacked rings, 12 to 16 nm in diameter.

The protein localises to the cytoplasm. Molecular chaperone; assists the folding of proteins upon ATP hydrolysis. Known to play a role, in vitro, in the folding of actin and tubulin. The protein is T-complex protein 1 subunit epsilon of Avena sativa (Oat).